A 123-amino-acid chain; its full sequence is MEATSQQFMSQSYLNAQETTTRATKNYLTSLHSTRKQPSKPLKRPAISSPLNPMHPHVYRVEPVNFKVLVQRLTGAPEHETVQAKPLKTSDDAAKQSSSSFAFDPSSSWGDFSFQNPANISRW.

Residues 24–55 form a disordered region; sequence TKNYLTSLHSTRKQPSKPLKRPAISSPLNPMH. Residues 33-43 are compositionally biased toward basic residues; the sequence is STRKQPSKPLK. Residues 66 to 75 carry the VQ motif; that stretch reads FKVLVQRLTG. Over residues 77–94 the composition is skewed to basic and acidic residues; it reads PEHETVQAKPLKTSDDAA. The interval 77-123 is disordered; that stretch reads PEHETVQAKPLKTSDDAAKQSSSSFAFDPSSSWGDFSFQNPANISRW. Residues 97–108 are compositionally biased toward low complexity; that stretch reads SSSSFAFDPSSS. Residues 109 to 123 are compositionally biased toward polar residues; the sequence is WGDFSFQNPANISRW.

It is found in the nucleus. In terms of biological role, may function as negative regulator of flowering transition. The polypeptide is VQ motif-containing protein 29 (Arabidopsis thaliana (Mouse-ear cress)).